A 395-amino-acid chain; its full sequence is Protein SGT1 (395 aa).

K32 is covalently cross-linked (Glycyl lysine isopeptide (Lys-Gly) (interchain with G-Cter in ubiquitin)). Positions 137–175 (KKNKKQKDSTNKHTIKPVESIENRGDNNSSHSPISPLKI) are disordered. Residues S168 and S171 each carry the phosphoserine modification. The CS domain maps to 182 to 277 (SPKFKIDWYQ…IDSTQWKKLE (96 aa)). The SGS domain maps to 312-395 (SYPSSSKKKI…PPEGMEPKHW (84 aa)). The tract at residues 373 to 395 (DWEDVSKGTVKTSPPEGMEPKHW) is disordered.

The protein belongs to the SGT1 family. Interacts with SKP1/CBF3D. Part of SCF E3 ubiquitin ligase complexes containing SKP1, CDC53, HRT1 and some F-box proteins. Interacts with CIR1/CDC35.

Involved in ubiquitination and subsequent proteasomal degradation of target proteins. Required for both entry into S phase and kinetochore function. Also involved in cyclic AMP (cAMP) pathway, possibly by participating in the assembly or the conformational activation of specific multiprotein complexes. The sequence is that of Protein SGT1 from Saccharomyces cerevisiae (strain ATCC 204508 / S288c) (Baker's yeast).